The chain runs to 122 residues: Large ribosomal subunit protein bL19 (122 aa).

It belongs to the bacterial ribosomal protein bL19 family.

This protein is located at the 30S-50S ribosomal subunit interface and may play a role in the structure and function of the aminoacyl-tRNA binding site. The polypeptide is Large ribosomal subunit protein bL19 (Prosthecochloris aestuarii (strain DSM 271 / SK 413)).